Consider the following 273-residue polypeptide: Inositol monophosphatase 1 (273 aa).

Positions 71, 91, 93, and 94 each coordinate Mg(2+). Glu-71 contributes to the substrate binding site. Substrate contacts are provided by residues 93 to 96 (VDGT), 194 to 196 (GSC), and Asp-221. Position 221 (Asp-221) interacts with Mg(2+).

This sequence belongs to the inositol monophosphatase superfamily. Mg(2+) is required as a cofactor. Expressed in seedlings, flowers, young and matures green fruits. Detected in roots and stems.

It carries out the reaction a myo-inositol phosphate + H2O = myo-inositol + phosphate. Its pathway is polyol metabolism; myo-inositol biosynthesis; myo-inositol from D-glucose 6-phosphate: step 2/2. Its function is as follows. Responsible for the provision of inositol required for synthesis of phosphatidylinositol and polyphosphoinositides. The polypeptide is Inositol monophosphatase 1 (IMP1) (Solanum lycopersicum (Tomato)).